Consider the following 509-residue polypeptide: Galactose-1-phosphate uridylyltransferase (509 aa).

Belongs to the galactose-1-phosphate uridylyltransferase type 2 family.

The protein localises to the cytoplasm. The enzyme catalyses alpha-D-galactose 1-phosphate + UDP-alpha-D-glucose = alpha-D-glucose 1-phosphate + UDP-alpha-D-galactose. Its pathway is carbohydrate metabolism; galactose metabolism. The chain is Galactose-1-phosphate uridylyltransferase from Fusobacterium nucleatum subsp. nucleatum (strain ATCC 25586 / DSM 15643 / BCRC 10681 / CIP 101130 / JCM 8532 / KCTC 2640 / LMG 13131 / VPI 4355).